We begin with the raw amino-acid sequence, 206 residues long: GTP cyclohydrolase 1 (206 aa).

Positions 98, 101, and 169 each coordinate Zn(2+).

Belongs to the GTP cyclohydrolase I family. As to quaternary structure, toroid-shaped homodecamer, composed of two pentamers of five dimers.

The catalysed reaction is GTP + H2O = 7,8-dihydroneopterin 3'-triphosphate + formate + H(+). It functions in the pathway cofactor biosynthesis; 7,8-dihydroneopterin triphosphate biosynthesis; 7,8-dihydroneopterin triphosphate from GTP: step 1/1. This is GTP cyclohydrolase 1 from Helicobacter hepaticus (strain ATCC 51449 / 3B1).